The sequence spans 89 residues: Small ribosomal subunit protein uS15 (89 aa).

The protein belongs to the universal ribosomal protein uS15 family. Part of the 30S ribosomal subunit. Forms a bridge to the 50S subunit in the 70S ribosome, contacting the 23S rRNA.

One of the primary rRNA binding proteins, it binds directly to 16S rRNA where it helps nucleate assembly of the platform of the 30S subunit by binding and bridging several RNA helices of the 16S rRNA. In terms of biological role, forms an intersubunit bridge (bridge B4) with the 23S rRNA of the 50S subunit in the ribosome. The polypeptide is Small ribosomal subunit protein uS15 (Streptococcus thermophilus (strain CNRZ 1066)).